Consider the following 218-residue polypeptide: Adenylate kinase (218 aa).

10-15 (GAGKGT) is a binding site for ATP. The tract at residues 30 to 59 (STGDMLRAAVKAGSEMGLKAKAVMDAGQLV) is NMP. AMP contacts are provided by residues Thr31, Arg36, 57–59 (QLV), 85–88 (GFPR), and Gln92. An LID region spans residues 122 to 159 (GRRVHEASGRTYHLVYNPPKVEGKDDVTGEDLVQRADD). Residues Arg123 and 132–133 (TY) contribute to the ATP site. Residues Arg156 and Arg167 each contribute to the AMP site. Residue Gly203 coordinates ATP.

It belongs to the adenylate kinase family. As to quaternary structure, monomer.

The protein resides in the cytoplasm. The enzyme catalyses AMP + ATP = 2 ADP. Its pathway is purine metabolism; AMP biosynthesis via salvage pathway; AMP from ADP: step 1/1. Catalyzes the reversible transfer of the terminal phosphate group between ATP and AMP. Plays an important role in cellular energy homeostasis and in adenine nucleotide metabolism. The protein is Adenylate kinase of Marinomonas sp. (strain MWYL1).